Here is a 190-residue protein sequence, read N- to C-terminus: Movement protein (190 aa).

Belongs to the tombusvirus/aureusvirus movement protein p22 family.

Its subcellular location is the host membrane. Functionally, transports viral genome to neighboring plant cells directly through plasmosdesmata, without any budding. The movement protein allows efficient cell to cell propagation, by bypassing the host cell wall barrier. The polypeptide is Movement protein (Cucumber necrosis virus (CNV)).